The primary structure comprises 639 residues: Sodium-dependent phosphate transport protein 2A (639 aa).

Residues 1–103 lie on the Cytoplasmic side of the membrane; that stretch reads MISYGENLGG…LRRAGVTLLK (103 aa). Ser-14 and Ser-34 each carry phosphoserine. Residues 104–125 traverse the membrane as a helical segment; sequence VPLMLSFLYLFVCSLDVLSSAF. Residues 126–145 lie on the Extracellular side of the membrane; sequence QLAGGKVAGDIFKDNAILSN. The chain crosses the membrane as a helical span at residues 146-163; it reads PVAGLVVGILVTVLVQSS. Over 164-165 the chain is Cytoplasmic; sequence ST. The helical transmembrane segment at 166–185 threads the bilayer; sequence STSIVVSMVSSGLLEVSSAI. Topologically, residues 186-347 are extracellular; that stretch reads PIIMGSNIGT…HIFVDTGLPD (162 aa). 2 cysteine pairs are disulfide-bonded: Cys-225-Cys-522 and Cys-306-Cys-336. N-linked (GlcNAc...) asparagine glycosylation is found at Asn-298, Asn-323, and Asn-330. A helical transmembrane segment spans residues 348–370; sequence LAVGLILLAGSLALLCTCLILLV. The Cytoplasmic portion of the chain corresponds to 371–412; sequence KMLNSLLKGQVAKVIQKVINTDFPTPFTWATGYFAMVVGASM. The helical transmembrane segment at 413-436 threads the bilayer; sequence TFVVQSSSVFTSAITPLIGLGVIS. Residues 437–466 lie on the Extracellular side of the membrane; the sequence is IERAYPLTLGSNIGTTTTAILAALASPREK. Residues 467-487 traverse the membrane as a helical segment; the sequence is LSSAFQIALCHFFFNISGILL. Residues 488–513 lie on the Cytoplasmic side of the membrane; sequence WYPVPCTRLPIRMAKALGKRTAKYRW. Residue Thr-508 is modified to Phosphothreonine; by PKC. A helical membrane pass occupies residues 514–534; the sequence is FAVLYLLLCFLLLPSMVFGLS. Residues 535–539 are Extracellular-facing; sequence MAGWR. Residues 540–561 traverse the membrane as a helical segment; the sequence is AMVGVGAPFGALLAFVVLVSAL. Over 562 to 639 the chain is Cytoplasmic; the sequence is QHRSPGCLPK…MPHHHDATRL (78 aa). At Ser-607 the chain carries Phosphoserine. At Thr-623 the chain carries Phosphothreonine. Ser-625 carries the post-translational modification Phosphoserine.

This sequence belongs to the SLC34A transporter family. In terms of assembly, interacts via its C-terminal region with NHERF4. Interacts with NHERF1. Interacts with TMEM174; regulates SLC34A1 internalization by PTH and FGF23.

The protein resides in the apical cell membrane. The protein localises to the cell membrane. It carries out the reaction 3 Na(+)(out) + phosphate(out) = 3 Na(+)(in) + phosphate(in). Its function is as follows. Involved in actively transporting phosphate into cells via Na(+) cotransport in the renal brush border membrane. The cotransport has a Na(+):Pi stoichiometry of 3:1 and is electrogenic. This Ovis aries (Sheep) protein is Sodium-dependent phosphate transport protein 2A.